The chain runs to 311 residues: Methionyl-tRNA formyltransferase (311 aa).

110-113 (SLLP) contributes to the (6S)-5,6,7,8-tetrahydrofolate binding site.

The protein belongs to the Fmt family.

The enzyme catalyses L-methionyl-tRNA(fMet) + (6R)-10-formyltetrahydrofolate = N-formyl-L-methionyl-tRNA(fMet) + (6S)-5,6,7,8-tetrahydrofolate + H(+). Its function is as follows. Attaches a formyl group to the free amino group of methionyl-tRNA(fMet). The formyl group appears to play a dual role in the initiator identity of N-formylmethionyl-tRNA by promoting its recognition by IF2 and preventing the misappropriation of this tRNA by the elongation apparatus. The chain is Methionyl-tRNA formyltransferase from Streptococcus gordonii (strain Challis / ATCC 35105 / BCRC 15272 / CH1 / DL1 / V288).